The chain runs to 426 residues: Glutamyl-tRNA reductase (426 aa).

Substrate-binding positions include 49–52, serine 101, 106–108, and glutamine 112; these read TCNR and EPQ. Cysteine 50 functions as the Nucleophile in the catalytic mechanism. 181–186 contributes to the NADP(+) binding site; it reads GAGETI. A disordered region spans residues 404 to 426; sequence DRLFPEKPGLPTSPHSYPDREDR.

The protein belongs to the glutamyl-tRNA reductase family. Homodimer.

The catalysed reaction is (S)-4-amino-5-oxopentanoate + tRNA(Glu) + NADP(+) = L-glutamyl-tRNA(Glu) + NADPH + H(+). It functions in the pathway porphyrin-containing compound metabolism; protoporphyrin-IX biosynthesis; 5-aminolevulinate from L-glutamyl-tRNA(Glu): step 1/2. In terms of biological role, catalyzes the NADPH-dependent reduction of glutamyl-tRNA(Glu) to glutamate 1-semialdehyde (GSA). This is Glutamyl-tRNA reductase from Xanthomonas campestris pv. phaseoli.